Reading from the N-terminus, the 109-residue chain is Transcription initiation factor IIA subunit 2 (109 aa).

This sequence belongs to the TFIIA subunit 2 family. In terms of assembly, TFIIA is a heterodimer composed of the large toa1 and the small toa2 subunits.

Its subcellular location is the nucleus. It is found in the cytoplasm. Functionally, TFIIA is a component of the transcription machinery of RNA polymerase II and plays an important role in transcriptional activation. TFIIA in a complex with tbp mediates transcriptional activity. The protein is Transcription initiation factor IIA subunit 2 (toa2) of Schizosaccharomyces pombe (strain 972 / ATCC 24843) (Fission yeast).